We begin with the raw amino-acid sequence, 195 residues long: 3-isopropylmalate dehydratase small subunit (195 aa).

The protein belongs to the LeuD family. LeuD type 1 subfamily. As to quaternary structure, heterodimer of LeuC and LeuD.

It carries out the reaction (2R,3S)-3-isopropylmalate = (2S)-2-isopropylmalate. It functions in the pathway amino-acid biosynthesis; L-leucine biosynthesis; L-leucine from 3-methyl-2-oxobutanoate: step 2/4. Catalyzes the isomerization between 2-isopropylmalate and 3-isopropylmalate, via the formation of 2-isopropylmaleate. The chain is 3-isopropylmalate dehydratase small subunit from Thermobifida fusca (strain YX).